The primary structure comprises 209 residues: Holliday junction branch migration complex subunit RuvA (209 aa).

Positions 1–70 (MINYLKGKTT…EDQQILYGFS (70 aa)) are domain I. The interval 71–149 (TDSERDLFRQ…QWEQAIALKT (79 aa)) is domain II. The segment at 150-160 (PVSVGVPSREI) is flexible linker. A domain III region spans residues 160 to 209 (ILEEVEMTLLALGYTDEEIDQAISAISQDNLLLKNPHVEEWLKSAIAWLS).

The protein belongs to the RuvA family. Homotetramer. Forms an RuvA(8)-RuvB(12)-Holliday junction (HJ) complex. HJ DNA is sandwiched between 2 RuvA tetramers; dsDNA enters through RuvA and exits via RuvB. An RuvB hexamer assembles on each DNA strand where it exits the tetramer. Each RuvB hexamer is contacted by two RuvA subunits (via domain III) on 2 adjacent RuvB subunits; this complex drives branch migration. In the full resolvosome a probable DNA-RuvA(4)-RuvB(12)-RuvC(2) complex forms which resolves the HJ.

It localises to the cytoplasm. Its function is as follows. The RuvA-RuvB-RuvC complex processes Holliday junction (HJ) DNA during genetic recombination and DNA repair, while the RuvA-RuvB complex plays an important role in the rescue of blocked DNA replication forks via replication fork reversal (RFR). RuvA specifically binds to HJ cruciform DNA, conferring on it an open structure. The RuvB hexamer acts as an ATP-dependent pump, pulling dsDNA into and through the RuvAB complex. HJ branch migration allows RuvC to scan DNA until it finds its consensus sequence, where it cleaves and resolves the cruciform DNA. The sequence is that of Holliday junction branch migration complex subunit RuvA from Gloeothece citriformis (strain PCC 7424) (Cyanothece sp. (strain PCC 7424)).